The following is a 348-amino-acid chain: Mannonate dehydratase (348 aa).

The protein belongs to the mannonate dehydratase family. Requires Fe(2+) as cofactor. It depends on Mn(2+) as a cofactor.

The catalysed reaction is D-mannonate = 2-dehydro-3-deoxy-D-gluconate + H2O. It participates in carbohydrate metabolism; pentose and glucuronate interconversion. Functionally, catalyzes the dehydration of D-mannonate. In Streptococcus agalactiae serotype Ia (strain ATCC 27591 / A909 / CDC SS700), this protein is Mannonate dehydratase.